Reading from the N-terminus, the 157-residue chain is Transcription elongation factor GreA (157 aa).

It belongs to the GreA/GreB family.

In terms of biological role, necessary for efficient RNA polymerase transcription elongation past template-encoded arresting sites. The arresting sites in DNA have the property of trapping a certain fraction of elongating RNA polymerases that pass through, resulting in locked ternary complexes. Cleavage of the nascent transcript by cleavage factors such as GreA or GreB allows the resumption of elongation from the new 3'terminus. GreA releases sequences of 2 to 3 nucleotides. In Hyphomonas neptunium (strain ATCC 15444), this protein is Transcription elongation factor GreA.